Consider the following 997-residue polypeptide: Sarcoplasmic/endoplasmic reticulum calcium ATPase 2 (997 aa).

The Cytoplasmic portion of the chain corresponds to 1–48 (MENAHTKTVEEVLGYFGVNESTGLSLEQVKKLKERWGSNELPAEEGKT). A Phosphoserine modification is found at Ser-38. Residues 49-69 (LLELVIEQFEDLLVRILLLAA) form a helical membrane-spanning segment. The Lumenal portion of the chain corresponds to 70 to 89 (CISFVLAWFEEGEETITAFV). Residues 90–110 (EPFVILLILVANAIVGVWQER) traverse the membrane as a helical segment. Residues 111-253 (NAENAIEALK…QERTPLQQKL (143 aa)) lie on the Cytoplasmic side of the membrane. Residues 254 to 273 (DEFGEQLSKVISLICIAVWI) traverse the membrane as a helical segment. Residues 274 to 295 (INIGHFNDPVHGGSWIRGAIYY) lie on the Lumenal side of the membrane. Tyr-294 and Tyr-295 each carry 3'-nitrotyrosine. A helical membrane pass occupies residues 296–313 (FKIAVALAVAAIPEGLPA). Residues Val-304, Ala-305, Ile-307, and Glu-309 each coordinate Ca(2+). At 314 to 756 (VITTCLALGT…EEGRAIYNNM (443 aa)) the chain is on the cytoplasmic side. Asp-351 serves as the catalytic 4-aspartylphosphate intermediate. Residues Asp-351 and Thr-353 each coordinate Mg(2+). Thr-353 is an ATP binding site. The residue at position 441 (Thr-441) is a Phosphothreonine. Glu-442, Arg-489, and Lys-514 together coordinate ATP. Ser-531 is subject to Phosphoserine. Residue Arg-559 coordinates ATP. The interaction with HAX1 stretch occupies residues 575 to 594 (MNLEDSANFIKYETNLTFVG). Ser-580 bears the Phosphoserine mark. Residues Thr-624, Gly-625, and Asp-626 each contribute to the ATP site. A phosphoserine mark is found at Ser-661 and Ser-663. Residues Arg-677 and Lys-683 each coordinate ATP. Position 702 (Asp-702) interacts with Mg(2+). An ATP-binding site is contributed by Asn-705. A helical transmembrane segment spans residues 757–776 (KQFIRYLISSNVGEVVCIFL). Positions 767 and 770 each coordinate Ca(2+). Residues 777–786 (TAALGFPEAL) lie on the Lumenal side of the membrane. Residues 787–807 (IPVQLLWVNLVTDGLPATALG) traverse the membrane as a helical segment. An interaction with PLN region spans residues 787 to 807 (IPVQLLWVNLVTDGLPATALG). The interaction with TMEM64 and PDIA3 stretch occupies residues 788–997 (PVQLLWVNLV…RNYLEPAILE (210 aa)). Ca(2+) is bound by residues Asn-795, Thr-798, and Asp-799. The Cytoplasmic portion of the chain corresponds to 808–827 (FNPPDLDIMNKPPRNPKEPL). A helical membrane pass occupies residues 828-850 (ISGWLFFRYLAIGCYVGAATVGA). Residues 851–896 (AAWWFIAADGGPRVSFYQLSHFLQCKDDNPDFEGVDCAIFESPYPM) lie on the Lumenal side of the membrane. Cysteines 875 and 887 form a disulfide. The chain crosses the membrane as a helical span at residues 897 to 916 (TMALSVLVTIEMCNALNSLS). Glu-907 contributes to the Ca(2+) binding site. At 917-929 (ENQSLLRMPPWEN) the chain is on the cytoplasmic side. Residues 930–948 (IWLVGSICLSMSLHFLILY) traverse the membrane as a helical segment. The tract at residues 931 to 942 (WLVGSICLSMSL) is interaction with PLN. Topologically, residues 949–963 (VEPLPLIFQITPLNL) are lumenal. A helical membrane pass occupies residues 964-984 (TQWLMVLKISLPVILMDETLK). Residues 985-997 (FVARNYLEPAILE) lie on the Cytoplasmic side of the membrane.

The protein belongs to the cation transport ATPase (P-type) (TC 3.A.3) family. Type IIA subfamily. As to quaternary structure, interacts with sarcolipin (SLN); the interaction inhibits ATP2A2 Ca(2+) affinity. Interacts with phospholamban (PLN); the interaction inhibits ATP2A2 Ca(2+) affinity. Interacts with myoregulin (MRLN). Interacts with ARLN and ERLN; the interactions inhibit ATP2A2 Ca(2+) affinity. Interacts with STRIT1/DWORF; the interaction results in activation of ATP2A2. Interacts with the monomeric forms of SLN, PLN, ARLN, ERLN and STRI1/DWORF. Interacts with HAX1. Interacts with S100A8 and S100A9. Interacts with SLC35G1 and STIM1. Interacts with TMEM203. Interacts with TMEM64 and PDIA3. Interacts with TMX1. Interacts with TMX2. Interacts with VMP1; VMP1 competes with PLN and SLN to prevent them from forming an inhibitory complex with ATP2A2. Interacts with ULK1. Interacts with S100A1 in a Ca(2+)-dependent manner. Interacts with TUNAR. Interacts with FLVCR2; this interaction occurs in the absence of heme and promotes ATP2A2 proteasomal degradation; this complex is dissociated upon heme binding. Interacts with FNIP1. In terms of assembly, interacts with TRAM2 (via C-terminus). It depends on Mg(2+) as a cofactor. In terms of processing, nitrated under oxidative stress. Nitration on the two tyrosine residues inhibits catalytic activity. Post-translationally, serotonylated on Gln residues by TGM2 in response to hypoxia, leading to its inactivation. As to expression, isoform 1 is expressed in the heart.

Its subcellular location is the endoplasmic reticulum membrane. The protein localises to the sarcoplasmic reticulum membrane. The catalysed reaction is Ca(2+)(in) + ATP + H2O = Ca(2+)(out) + ADP + phosphate + H(+). Has different conformational states with differential Ca2+ affinity. The E1 conformational state (active form) shows high Ca(2+) affinity, while the E2 state exhibits low Ca(2+) affinity. Binding of ATP allosterically increases its affinity for subsequent binding of Ca2+. Reversibly inhibited by phospholamban (PLN) at low calcium concentrations. PLN inhibits ATP2A2 Ca(2+) affinity by disrupting its allosteric activation by ATP. Inhibited by sarcolipin (SLN) and myoregulin (MRLN). The inhibition is blocked by VMP1. Enhanced by STRIT1/DWORF; STRIT1 increases activity by displacing sarcolipin (SLN), phospholamban (PLN) and myoregulin (MRLN). Stabilizes SERCA2 in its E2 state. This magnesium-dependent enzyme catalyzes the hydrolysis of ATP coupled with the translocation of calcium from the cytosol to the sarcoplasmic reticulum lumen. Involved in autophagy in response to starvation. Upon interaction with VMP1 and activation, controls ER-isolation membrane contacts for autophagosome formation. Also modulates ER contacts with lipid droplets, mitochondria and endosomes. In coordination with FLVCR2 mediates heme-stimulated switching from mitochondrial ATP synthesis to thermogenesis. In terms of biological role, involved in the regulation of the contraction/relaxation cycle. Acts as a regulator of TNFSF11-mediated Ca(2+) signaling pathways via its interaction with TMEM64 which is critical for the TNFSF11-induced CREB1 activation and mitochondrial ROS generation necessary for proper osteoclast generation. Association between TMEM64 and SERCA2 in the ER leads to cytosolic Ca(2+) spiking for activation of NFATC1 and production of mitochondrial ROS, thereby triggering Ca(2+) signaling cascades that promote osteoclast differentiation and activation. The chain is Sarcoplasmic/endoplasmic reticulum calcium ATPase 2 (ATP2A2) from Felis catus (Cat).